Consider the following 151-residue polypeptide: Ribosome maturation factor RimP (151 aa).

Belongs to the RimP family.

The protein localises to the cytoplasm. Its function is as follows. Required for maturation of 30S ribosomal subunits. This Shewanella sp. (strain ANA-3) protein is Ribosome maturation factor RimP.